A 591-amino-acid polypeptide reads, in one-letter code: MANFNVPKLGVFPVAAVFDIDNVPEDSSATGSRWLPSIYQGGNYWGGGPQALHAQVSNFDSSNRLPYNPRTENNPAGNCAFAFNPFGQYISNISSAQSVHRRIYGIDLNDEPLFSPNAASITNGGNPTMSQDTGYHNIGPINTAYKAEIFRPVNPLPMSDTAPDPETLEPGQTEPLIKSDGVYSNSGIASFIFDRPVTEPNPNWPPLPPPVIPIIYPTPALGIGAAAAYGFGYQVTVYRWEEIPVEFIADPETCPAQPTTDKVIIRTTDLNPEGSPCAYEAGIILVRQTSNPMNAVAGRLVPYVEDIAVDIFLTGKFFTLNPPLRITNNYFADDEVKENTVTIGNYTTTLSSAYYAVYKTDGYGGATCFIASGGAGISALVQLQDNSVLDVLYYSLPLSLGGSKAAIDEWVANNCGLFPMSGGLDKTTLLEIPRRQLEAINPQDGPGQYDLFILDDSGAYASFSSFIGYPEAAYYVAGAATFMDVENPDEIIFILRNGAGWYACEIGDALKIADDEFDSVDYFAYRGGVMFIGSARYTEGGDPLPIKYRAIIPGLPRGRLPRVVLEYQAVGMSFIPCQTHCLGKGGIISKV.

Cys254 and Cys277 form a disulfide bridge.

The protein resides in the virion. Functionally, adsorption protein. In association with P31 and trimeric P5, forms the spike complexes located at the 5-fold vertices of the capsid. Involved in recognition and attachment to the receptor on the surface of the host. Likely triggers the processes of vertex disassembly, membrane tube formation, and subsequent DNA injection. Essential for viral infectivity. The polypeptide is Adsorption protein P2 (II) (Acinetobacter calcoaceticus (Arthrobacter siderocapsulatus)).